The primary structure comprises 336 residues: Protein-glutamate methylesterase/protein-glutamine glutaminase 1 (336 aa).

Positions 2–119 constitute a Response regulatory domain; sequence KIAIVNDMPL…GNPQEAAAPL (118 aa). Asp-53 bears the 4-aspartylphosphate mark. A CheB-type methylesterase domain is found at 147–336; it reads TASRQRLVAI…APRLLEIFPK (190 aa). Active-site residues include Ser-159, His-186, and Asp-279.

It belongs to the CheB family. Post-translationally, phosphorylated by CheA. Phosphorylation of the N-terminal regulatory domain activates the methylesterase activity.

It is found in the cytoplasm. It carries out the reaction [protein]-L-glutamate 5-O-methyl ester + H2O = L-glutamyl-[protein] + methanol + H(+). The enzyme catalyses L-glutaminyl-[protein] + H2O = L-glutamyl-[protein] + NH4(+). In terms of biological role, involved in chemotaxis. Part of a chemotaxis signal transduction system that modulates chemotaxis in response to various stimuli. Catalyzes the demethylation of specific methylglutamate residues introduced into the chemoreceptors (methyl-accepting chemotaxis proteins or MCP) by CheR. Also mediates the irreversible deamidation of specific glutamine residues to glutamic acid. This Pseudomonas fluorescens (strain Pf0-1) protein is Protein-glutamate methylesterase/protein-glutamine glutaminase 1.